The primary structure comprises 817 residues: Exocyst complex component 6 (817 aa).

2 coiled-coil regions span residues 87–149 (QSFV…DQIA) and 247–270 (TDAERAKKIQEEARKNASNVEIEV).

Belongs to the SEC15 family. The exocyst complex is composed of sec-3/exoc1, sec-5/exoc2, sec-6/exoc3, sec-8/exoc4, sec-10/exoc5, sec-15/exoc6, exo-70/exoc7 and exo-84/exoc8.

In terms of biological role, component of the exocyst complex involved in the docking of exocytic vesicles with fusion sites on the plasma membrane. The protein is Exocyst complex component 6 (sec-15) of Caenorhabditis elegans.